The sequence spans 274 residues: Ribosomal RNA small subunit methyltransferase A (274 aa).

S-adenosyl-L-methionine is bound by residues asparagine 26, leucine 28, glycine 53, glutamate 74, aspartate 94, and asparagine 114.

The protein belongs to the class I-like SAM-binding methyltransferase superfamily. rRNA adenine N(6)-methyltransferase family. RsmA subfamily.

The protein resides in the cytoplasm. It catalyses the reaction adenosine(1518)/adenosine(1519) in 16S rRNA + 4 S-adenosyl-L-methionine = N(6)-dimethyladenosine(1518)/N(6)-dimethyladenosine(1519) in 16S rRNA + 4 S-adenosyl-L-homocysteine + 4 H(+). Functionally, specifically dimethylates two adjacent adenosines (A1518 and A1519) in the loop of a conserved hairpin near the 3'-end of 16S rRNA in the 30S particle. May play a critical role in biogenesis of 30S subunits. The sequence is that of Ribosomal RNA small subunit methyltransferase A from Bdellovibrio bacteriovorus (strain ATCC 15356 / DSM 50701 / NCIMB 9529 / HD100).